Consider the following 248-residue polypeptide: Leucyl/phenylalanyl-tRNA--protein transferase (248 aa).

This sequence belongs to the L/F-transferase family.

It is found in the cytoplasm. The catalysed reaction is N-terminal L-lysyl-[protein] + L-leucyl-tRNA(Leu) = N-terminal L-leucyl-L-lysyl-[protein] + tRNA(Leu) + H(+). The enzyme catalyses N-terminal L-arginyl-[protein] + L-leucyl-tRNA(Leu) = N-terminal L-leucyl-L-arginyl-[protein] + tRNA(Leu) + H(+). It carries out the reaction L-phenylalanyl-tRNA(Phe) + an N-terminal L-alpha-aminoacyl-[protein] = an N-terminal L-phenylalanyl-L-alpha-aminoacyl-[protein] + tRNA(Phe). Its function is as follows. Functions in the N-end rule pathway of protein degradation where it conjugates Leu, Phe and, less efficiently, Met from aminoacyl-tRNAs to the N-termini of proteins containing an N-terminal arginine or lysine. This is Leucyl/phenylalanyl-tRNA--protein transferase from Rhizorhabdus wittichii (strain DSM 6014 / CCUG 31198 / JCM 15750 / NBRC 105917 / EY 4224 / RW1) (Sphingomonas wittichii).